The chain runs to 133 residues: ATP synthase epsilon chain, chloroplastic (133 aa).

The protein belongs to the ATPase epsilon chain family. As to quaternary structure, F-type ATPases have 2 components, CF(1) - the catalytic core - and CF(0) - the membrane proton channel. CF(1) has five subunits: alpha(3), beta(3), gamma(1), delta(1), epsilon(1). CF(0) has three main subunits: a, b and c.

The protein resides in the plastid. It is found in the chloroplast thylakoid membrane. In terms of biological role, produces ATP from ADP in the presence of a proton gradient across the membrane. This chain is ATP synthase epsilon chain, chloroplastic, found in Nephroselmis olivacea (Green alga).